The following is a 158-amino-acid chain: Protein OPG060 (158 aa).

It belongs to the orthopoxvirus OPG058 family.

The sequence is that of Protein OPG060 (OPG060) from Cynomys gunnisoni (Gunnison's prairie dog).